The chain runs to 209 residues: Large ribosomal subunit protein uL4 (209 aa).

This sequence belongs to the universal ribosomal protein uL4 family. Part of the 50S ribosomal subunit.

One of the primary rRNA binding proteins, this protein initially binds near the 5'-end of the 23S rRNA. It is important during the early stages of 50S assembly. It makes multiple contacts with different domains of the 23S rRNA in the assembled 50S subunit and ribosome. Its function is as follows. Forms part of the polypeptide exit tunnel. The chain is Large ribosomal subunit protein uL4 from Borrelia duttonii (strain Ly).